The sequence spans 757 residues: 5-methyltetrahydropteroyltriglutamate--homocysteine methyltransferase (757 aa).

5-methyltetrahydropteroyltri-L-glutamate-binding positions include 16-19 and lysine 112; that span reads RELK. L-homocysteine is bound by residues 432 to 434 and glutamate 485; that span reads IGS. Residues 432–434 and glutamate 485 contribute to the L-methionine site; that span reads IGS. 5-methyltetrahydropteroyltri-L-glutamate is bound by residues 516–517 and tryptophan 562; that span reads RC. Residue aspartate 600 coordinates L-homocysteine. Residue aspartate 600 coordinates L-methionine. 5-methyltetrahydropteroyltri-L-glutamate is bound at residue glutamate 606. Positions 642, 644, and 666 each coordinate Zn(2+). Histidine 695 serves as the catalytic Proton donor. Zn(2+) is bound at residue cysteine 727.

The protein belongs to the vitamin-B12 independent methionine synthase family. The cofactor is Zn(2+).

It carries out the reaction 5-methyltetrahydropteroyltri-L-glutamate + L-homocysteine = tetrahydropteroyltri-L-glutamate + L-methionine. It functions in the pathway amino-acid biosynthesis; L-methionine biosynthesis via de novo pathway; L-methionine from L-homocysteine (MetE route): step 1/1. Catalyzes the transfer of a methyl group from 5-methyltetrahydrofolate to homocysteine resulting in methionine formation. The polypeptide is 5-methyltetrahydropteroyltriglutamate--homocysteine methyltransferase (Actinobacillus pleuropneumoniae serotype 7 (strain AP76)).